Consider the following 452-residue polypeptide: Bis(5'-adenosyl)-triphosphatase ENPP4 (452 aa).

The first 15 residues, 1–15 (MKLLVILLFSGLITG), serve as a signal peptide directing secretion. Residues 16–406 (FRSDSSSSLP…DQWCINLPEA (391 aa)) are Extracellular-facing. Positions 34 and 70 each coordinate Zn(2+). Catalysis depends on T70, which acts as the AMP-threonine intermediate. Substrate contacts are provided by N91 and Y154. Residues N155 and N166 are each glycosylated (N-linked (GlcNAc...) asparagine). D189, H193, D237, and H238 together coordinate Zn(2+). D189 contributes to the substrate binding site. A disulfide bridge connects residues C254 and C287. N-linked (GlcNAc...) asparagine glycosylation is present at N276. Position 335 (H335) interacts with Zn(2+). C393 and C400 are joined by a disulfide. The helical transmembrane segment at 407-427 (IAIVIGSLLVLTMLTCLIIIM) threads the bilayer. Over 428 to 452 (QNRLSVPRPFSRLQLQEDDDDPLIG) the chain is Cytoplasmic.

This sequence belongs to the nucleotide pyrophosphatase/phosphodiesterase family. Requires Zn(2+) as cofactor.

It localises to the cell membrane. The catalysed reaction is P(1),P(3)-bis(5'-adenosyl) triphosphate + H2O = AMP + ADP + 2 H(+). In terms of biological role, hydrolyzes extracellular Ap3A into AMP and ADP, and Ap4A into AMP and ATP. Ap3A and Ap4A are diadenosine polyphosphates thought to induce proliferation of vascular smooth muscle cells. Acts as a procoagulant, mediating platelet aggregation at the site of nascent thrombus via release of ADP from Ap3A and activation of ADP receptors. In Pongo abelii (Sumatran orangutan), this protein is Bis(5'-adenosyl)-triphosphatase ENPP4 (ENPP4).